The chain runs to 374 residues: tRNA-specific 2-thiouridylase MnmA (374 aa).

ATP contacts are provided by residues 15-22 (GMSGGVDS) and methionine 41. Positions 101 to 103 (NPD) are interaction with target base in tRNA. Cysteine 106 serves as the catalytic Nucleophile. Residues cysteine 106 and cysteine 203 are joined by a disulfide bond. Glycine 130 is an ATP binding site. The interval 153–155 (KDQ) is interaction with tRNA. Cysteine 203 (cysteine persulfide intermediate) is an active-site residue. The interval 311–312 (RY) is interaction with tRNA.

It belongs to the MnmA/TRMU family.

Its subcellular location is the cytoplasm. The catalysed reaction is S-sulfanyl-L-cysteinyl-[protein] + uridine(34) in tRNA + AH2 + ATP = 2-thiouridine(34) in tRNA + L-cysteinyl-[protein] + A + AMP + diphosphate + H(+). Its function is as follows. Catalyzes the 2-thiolation of uridine at the wobble position (U34) of tRNA, leading to the formation of s(2)U34. This Lysinibacillus sphaericus (strain C3-41) protein is tRNA-specific 2-thiouridylase MnmA.